The primary structure comprises 192 residues: Threonylcarbamoyl-AMP synthase (192 aa).

Residues 5–192 (TTSVAEAAHC…DATTGRVIRD (188 aa)) enclose the YrdC-like domain.

This sequence belongs to the SUA5 family. TsaC subfamily.

The protein resides in the cytoplasm. The enzyme catalyses L-threonine + hydrogencarbonate + ATP = L-threonylcarbamoyladenylate + diphosphate + H2O. Functionally, required for the formation of a threonylcarbamoyl group on adenosine at position 37 (t(6)A37) in tRNAs that read codons beginning with adenine. Catalyzes the conversion of L-threonine, HCO(3)(-)/CO(2) and ATP to give threonylcarbamoyl-AMP (TC-AMP) as the acyladenylate intermediate, with the release of diphosphate. This is Threonylcarbamoyl-AMP synthase from Acinetobacter baylyi (strain ATCC 33305 / BD413 / ADP1).